We begin with the raw amino-acid sequence, 1145 residues long: Error-prone DNA polymerase (1145 aa).

It belongs to the DNA polymerase type-C family. DnaE2 subfamily.

The protein resides in the cytoplasm. The enzyme catalyses DNA(n) + a 2'-deoxyribonucleoside 5'-triphosphate = DNA(n+1) + diphosphate. DNA polymerase involved in damage-induced mutagenesis and translesion synthesis (TLS). It is not the major replicative DNA polymerase. The protein is Error-prone DNA polymerase of Rhodopirellula baltica (strain DSM 10527 / NCIMB 13988 / SH1).